The following is a 252-amino-acid chain: MKTVTVKDLVIGAGAPKIIVSLMAKDIARVKSEALAYREADFDILEWRVDHFADLSNVESVMAAAKILRETMPEKPLLFTFRSAKEGGEQAISTEAYIALNRAAIDSGLVDMIDLELFTGDDQVKETVAYAHAHDVKVVMSNHDFHKTPEAEEIIARLRKMQSFDADIPKIALMPQSTSDVLTLLTATLEMQEQYADRPIITMSMAKTGVISRLAGEVFGSAATFGAVKKASAPGQISVNDLRTVLTILHQA.

Residues S21, 46–48 (EWR), and R82 contribute to the 3-dehydroquinate site. H143 acts as the Proton donor/acceptor in catalysis. The active-site Schiff-base intermediate with substrate is K170. R213, S232, and Q236 together coordinate 3-dehydroquinate.

This sequence belongs to the type-I 3-dehydroquinase family. In terms of assembly, homodimer.

It carries out the reaction 3-dehydroquinate = 3-dehydroshikimate + H2O. It participates in metabolic intermediate biosynthesis; chorismate biosynthesis; chorismate from D-erythrose 4-phosphate and phosphoenolpyruvate: step 3/7. Its function is as follows. Involved in the third step of the chorismate pathway, which leads to the biosynthesis of aromatic amino acids. Catalyzes the cis-dehydration of 3-dehydroquinate (DHQ) and introduces the first double bond of the aromatic ring to yield 3-dehydroshikimate. This is 3-dehydroquinate dehydratase from Shigella sonnei (strain Ss046).